We begin with the raw amino-acid sequence, 126 residues long: Fluoride-specific ion channel FluC (126 aa).

4 consecutive transmembrane segments (helical) span residues 4-24 (ILAIALGAAIGANLRYGIGLW), 35-55 (YGTFIINLLGCLGIGLLLTLI), 68-88 (MLVTGLLGGFTTFSTFGYESF), and 100-120 (IGYMVGSVVGGLIAVIIGVGL). Residues Gly75 and Thr78 each coordinate Na(+).

It belongs to the fluoride channel Fluc/FEX (TC 1.A.43) family.

It is found in the cell membrane. The enzyme catalyses fluoride(in) = fluoride(out). Na(+) is not transported, but it plays an essential structural role and its presence is essential for fluoride channel function. Fluoride-specific ion channel. Important for reducing fluoride concentration in the cell, thus reducing its toxicity. The protein is Fluoride-specific ion channel FluC of Chloroflexus aurantiacus (strain ATCC 29366 / DSM 635 / J-10-fl).